Reading from the N-terminus, the 982-residue chain is Glutamate [NMDA] receptor subunit 1 (982 aa).

The N-terminal stretch at 1–16 (MAFAVWFLSTFVIVAA) is a signal peptide. At 17 to 561 (QRHMALEHEG…TLVSFLQPFS (545 aa)) the chain is on the extracellular side. N-linked (GlcNAc...) asparagine glycans are attached at residues Asn-247, Asn-303, Asn-334, Asn-386, Asn-443, Asn-470, and Asn-490. Glycine is bound by residues 518–520 (PLT) and Arg-525. A helical transmembrane segment spans residues 562–582 (NTLWILVMVSVHVVALVLYLL). The Cytoplasmic segment spans residues 583–639 (DRFSPFGRFKLSHSDSNEEKALNLSSAVWFAWGVLLNSGIGEGTPRSFSARVLGMVW). A helical membrane pass occupies residues 640 to 660 (AGFAMIIVASYTANLAAFLVL). Residues 661-819 (ERPKTKLSGI…KTPNTLGLKN (159 aa)) lie on the Extracellular side of the membrane. Residue Asn-681 is glycosylated (N-linked (GlcNAc...) asparagine). Ser-691 and Asp-735 together coordinate glycine. Residues 820 to 840 (MAGVFILVGVGIAGGVGLIII) form a helical membrane-spanning segment. The Cytoplasmic portion of the chain corresponds to 841-982 (EVIYKKHQVK…YTSDVSHLVV (142 aa)). The segment at 934–982 (EIGKPGQSPKVIGGPPHPMLGKTRPQAQQNLLPPRYSPGYTSDVSHLVV) is disordered. Polar residues predominate over residues 972–982 (GYTSDVSHLVV).

Belongs to the glutamate-gated ion channel (TC 1.A.10.1) family. As to quaternary structure, forms a heteromeric NMDA channel with Nmdar2.

Its subcellular location is the cell membrane. The protein resides in the postsynaptic cell membrane. The protein localises to the postsynaptic density. Functionally, NMDA receptor subtype of glutamate-gated ion channels with high calcium permeability and voltage-dependent sensitivity to magnesium. Mediated by glycine. This protein plays a key role in synaptic plasticity, synaptogenesis, excitotoxicity, memory acquisition and learning. It mediates neuronal functions in glutamate neurotransmission. Is involved in the cell surface targeting of NMDA receptors. Plays a role in associative learning and in long-term memory consolidation. This chain is Glutamate [NMDA] receptor subunit 1, found in Drosophila willistoni (Fruit fly).